Here is a 316-residue protein sequence, read N- to C-terminus: tRNA dimethylallyltransferase (316 aa).

9–16 contacts ATP; the sequence is GPTASGKS. 11-16 serves as a coordination point for substrate; sequence TASGKS. Interaction with substrate tRNA stretches follow at residues 34–37 and 158–162; these read DSMQ and QRLAR.

This sequence belongs to the IPP transferase family. As to quaternary structure, monomer. Requires Mg(2+) as cofactor.

The enzyme catalyses adenosine(37) in tRNA + dimethylallyl diphosphate = N(6)-dimethylallyladenosine(37) in tRNA + diphosphate. Its function is as follows. Catalyzes the transfer of a dimethylallyl group onto the adenine at position 37 in tRNAs that read codons beginning with uridine, leading to the formation of N6-(dimethylallyl)adenosine (i(6)A). The chain is tRNA dimethylallyltransferase from Hyphomonas neptunium (strain ATCC 15444).